Reading from the N-terminus, the 1214-residue chain is Lysine-specific demethylase 3A (1214 aa).

Phosphoserine occurs at positions 150 and 209. Residues 194 to 211 show a composition bias toward polar residues; it reads TPSSNRQQNTPQAANSPP. 3 disordered regions span residues 194–215, 271–293, and 310–398; these read TPSSNRQQNTPQAANSPPNIGA, PKGSCIQPKTNTDQESRLESTPQ, and KAEL…KSVL. At Ser330 the chain carries Phosphoserine. Residues 361 to 370 are compositionally biased toward polar residues; the sequence is LGSQSQNLKE. Residues 371–380 are compositionally biased toward basic and acidic residues; that stretch reads TSVKVDHDSC. Residues 381-391 are compositionally biased toward polar residues; sequence CTRSSNKTQTP. A C6-type zinc finger spans residues 546 to 571; sequence CDVCDTTIFNLHWVCPRCGFGVCVDC. The LXXLL motif signature appears at 769–773; that stretch reads LRNLL. Lys779 carries the post-translational modification N6-acetyllysine. Positions 944 to 1167 constitute a JmjC domain; the sequence is MPSRFDDLMA…HCFWLTQEFR (224 aa). Fe cation contacts are provided by His1006, Asp1008, and His1135.

It belongs to the JHDM2 histone demethylase family. Interacts with VRK1. Requires Fe(2+) as cofactor. As to expression, testis specific. Expressed only in male germ cells.

The protein resides in the cytoplasm. It is found in the nucleus. It carries out the reaction N(6),N(6)-dimethyl-L-lysyl(9)-[histone H3] + 2 2-oxoglutarate + 2 O2 = L-lysyl(9)-[histone H3] + 2 formaldehyde + 2 succinate + 2 CO2. Its function is as follows. Histone demethylase that specifically demethylates 'Lys-9' of histone H3, thereby playing a central role in histone code. Preferentially demethylates mono- and dimethylated H3 'Lys-9' residue, with a preference for dimethylated residue, while it has weak or no activity on trimethylated H3 'Lys-9'. Demethylation of Lys residue generates formaldehyde and succinate. Involved in hormone-dependent transcriptional activation, by participating in recruitment to androgen-receptor target genes, resulting in H3 'Lys-9' demethylation and transcriptional activation. Involved in spermatogenesis by regulating expression of target genes such as PRM1 and TNP1 which are required for packaging and condensation of sperm chromatin. Directly regulates expression of PPARA and UCP1 and is involved in obesity resistance. This is Lysine-specific demethylase 3A (Kdm3a) from Rattus norvegicus (Rat).